The following is a 260-amino-acid chain: MEPKARCSDSQRGGPCTNHEPPALEEGGRRHRRARAGSSSGALGLQLRPRVRPQRRAAAAAAAAAAAAAAATAASAAASAILGGRAAAAQPIGHPDALERAARANLRARRGDAWRGRGAPQRRAPAEARALGAASRALARRGAAPAAPLRGQPGPALPPPGPEAEPALPGGGQLAVAGPAAPEAPGLGLGGGLDPVRPRGGGRTRGHPRGAGPGVRRGGLLGRGNLPHIGGGHIPLGLVFLVQPAAGGRALLLDQPAVAG.

Disordered stretches follow at residues 1–50 (MEPK…LRPR) and 108–219 (ARRG…RRGG). Composition is skewed to low complexity over residues 36–48 (AGSS…LQLR), 116–154 (GRGA…GQPG), and 164–186 (AEPA…EAPG). The interval 104-130 (ANLRARRGDAWRGRGAPQRRAPAEARA) is required for nucleolar localization. 2 stretches are compositionally biased toward gly residues: residues 187–199 (LGLG…VRPR) and 209–219 (RGAGPGVRRGG).

In terms of assembly, interacts with C1QBP; the interaction results in nucleolar localization of C1QBP, probably due to prevention of C1QBP maturation and redirection from mitochondria to nucleoli. Post-translationally, undergoes proteolytic cleavage to produce a secreted C-terminal fragment.

It is found in the nucleus. It localises to the nucleolus. The protein resides in the secreted. The sequence is that of POLG alternative reading frame from Homo sapiens (Human).